The sequence spans 344 residues: Probable dual-specificity RNA methyltransferase RlmN (344 aa).

E92 functions as the Proton acceptor in the catalytic mechanism. A Radical SAM core domain is found at 98–325 (DEDRATLCVS…TTIRASRGED (228 aa)). C105 and C330 form a disulfide bridge. [4Fe-4S] cluster is bound by residues C112, C116, and C119. S-adenosyl-L-methionine is bound by residues 157 to 158 (GE), S189, 211 to 213 (SLH), and H287. C330 (S-methylcysteine intermediate) is an active-site residue.

The protein belongs to the radical SAM superfamily. RlmN family. [4Fe-4S] cluster serves as cofactor.

It localises to the cytoplasm. The catalysed reaction is adenosine(2503) in 23S rRNA + 2 reduced [2Fe-2S]-[ferredoxin] + 2 S-adenosyl-L-methionine = 2-methyladenosine(2503) in 23S rRNA + 5'-deoxyadenosine + L-methionine + 2 oxidized [2Fe-2S]-[ferredoxin] + S-adenosyl-L-homocysteine. It catalyses the reaction adenosine(37) in tRNA + 2 reduced [2Fe-2S]-[ferredoxin] + 2 S-adenosyl-L-methionine = 2-methyladenosine(37) in tRNA + 5'-deoxyadenosine + L-methionine + 2 oxidized [2Fe-2S]-[ferredoxin] + S-adenosyl-L-homocysteine. Functionally, specifically methylates position 2 of adenine 2503 in 23S rRNA and position 2 of adenine 37 in tRNAs. The polypeptide is Probable dual-specificity RNA methyltransferase RlmN (Bacteroides fragilis (strain YCH46)).